Here is a 130-residue protein sequence, read N- to C-terminus: Small ribosomal subunit protein uS9 (130 aa).

Belongs to the universal ribosomal protein uS9 family.

This is Small ribosomal subunit protein uS9 from Neisseria gonorrhoeae (strain ATCC 700825 / FA 1090).